We begin with the raw amino-acid sequence, 229 residues long: Germin-like protein subfamily 1 member 7 (229 aa).

Positions 1-24 (MEGFLRFLVAKAILLALASSFVSC) are cleaved as a signal peptide. Cysteines 34 and 50 form a disulfide. The Cupin type-1 domain maps to 64–215 (SGLNIAGNTI…AFQLDVNVVK (152 aa)). The N-linked (GlcNAc...) asparagine glycan is linked to Asn79. Residues His112, His114, Glu119, and His161 each coordinate Mn(2+).

This sequence belongs to the germin family. Oligomer (believed to be a pentamer but probably hexamer).

It localises to the secreted. The protein resides in the extracellular space. The protein localises to the apoplast. May play a role in plant defense. Probably has no oxalate oxidase activity even if the active site is conserved. The chain is Germin-like protein subfamily 1 member 7 from Arabidopsis thaliana (Mouse-ear cress).